A 295-amino-acid chain; its full sequence is Putative NADH-ubiquinone oxidoreductase MJ0520 (295 aa).

The next 8 membrane-spanning stretches (helical) occupy residues 8–28 (LIGAINLTIHAFLVGSLLLGL), 69–89 (LYIFVALLDIAIWLAALIIAI), 129–149 (VFSAAAEVPLFAVVAAIYLTT), 163–183 (IHGSLLFKMPICAFAFFILLV), 199–219 (IVSGYMTEHYGLLGAIIYIAE), 220–240 (AIAYFVLLWLFIAVFIGPLVI), 243–263 (PVLTLAVMVVMTVILAFVNGL), and 273–293 (VMLQMTIAGLVLCDVLYRLIV).

The protein belongs to the complex I subunit 1 family.

It is found in the cell membrane. The catalysed reaction is a ubiquinone + NADH + 5 H(+)(in) = a ubiquinol + NAD(+) + 4 H(+)(out). This Methanocaldococcus jannaschii (strain ATCC 43067 / DSM 2661 / JAL-1 / JCM 10045 / NBRC 100440) (Methanococcus jannaschii) protein is Putative NADH-ubiquinone oxidoreductase MJ0520.